Reading from the N-terminus, the 676-residue chain is Kojibiose hydrolase (676 aa).

The signal sequence occupies residues 1 to 20 (MNKGIIQLLALSLFCISVKA). E469 functions as the Proton donor in the catalytic mechanism. The active-site Proton acceptor is E613.

This sequence belongs to the glycosyl hydrolase 65 family.

The enzyme catalyses kojibiose + H2O = beta-D-glucose + D-glucose. Its function is as follows. Glycosidase that specifically hydrolyzes kojibiose to beta-glucose and glucose. Besides its activity on kojibiose, is also able to act on alpha-1,2-oligoglucans with a higher degree of polymerization. Shows weak activity on nigerose, but is not capable of breaking down trehalose, maltose, isomaltose, sucrose, isomaltulose, turanose or melezitose. This is Kojibiose hydrolase from Mucilaginibacter mallensis.